A 932-amino-acid chain; its full sequence is Isoleucine--tRNA ligase (932 aa).

The 'HIGH' region motif lies at 57–67; it reads PYANGDIHMGH. Residue Glu556 participates in L-isoleucyl-5'-AMP binding. The 'KMSKS' region motif lies at 597–601; sequence KMSKS. Lys600 lines the ATP pocket. Residues Cys891, Cys894, Cys911, and Cys914 each coordinate Zn(2+).

This sequence belongs to the class-I aminoacyl-tRNA synthetase family. IleS type 1 subfamily. In terms of assembly, monomer. It depends on Zn(2+) as a cofactor.

The protein resides in the cytoplasm. It catalyses the reaction tRNA(Ile) + L-isoleucine + ATP = L-isoleucyl-tRNA(Ile) + AMP + diphosphate. Catalyzes the attachment of isoleucine to tRNA(Ile). As IleRS can inadvertently accommodate and process structurally similar amino acids such as valine, to avoid such errors it has two additional distinct tRNA(Ile)-dependent editing activities. One activity is designated as 'pretransfer' editing and involves the hydrolysis of activated Val-AMP. The other activity is designated 'posttransfer' editing and involves deacylation of mischarged Val-tRNA(Ile). The protein is Isoleucine--tRNA ligase of Lactiplantibacillus plantarum (strain ATCC BAA-793 / NCIMB 8826 / WCFS1) (Lactobacillus plantarum).